Consider the following 512-residue polypeptide: Cytochrome P450 monooxygenase cheE (512 aa).

A helical membrane pass occupies residues 5-27; it reads YFAAESSWSPYVILVLALAAMVA. Asn53, Asn124, and Asn168 each carry an N-linked (GlcNAc...) asparagine glycan. Position 455 (Cys455) interacts with heme. Asn499 and Asn508 each carry an N-linked (GlcNAc...) asparagine glycan.

The protein belongs to the cytochrome P450 family. It depends on heme as a cofactor.

It localises to the membrane. It participates in secondary metabolite biosynthesis. Its function is as follows. Cytochrome P450 monooxygenase; part of the gene cluster that mediates the biosynthesis of chaetoglobosin A which has a unique inhibitory activity against actin polymerization in mammalian cells. Chaetoglobosin A and its intermediates are involved in the morphological differentiation of C.globosum. The first step of the pathway is the synthesis of prochaetoglobosin I via condensation of one acetyl-CoA, 8 malonyl-CoA, and a L-tryptophan molecule by the PKS-NRPS hybrid synthetase cheA, followed by reduction of backbone double bond to install desired geometry by the enoyl reductase cheB. Further multiple oxidation steps performed by the cytochrome P450 monooxygenases cheE and cheG, as well as by the FAD-linked oxidoreductase cheF, lead to the formation of chaetoglobosin A. Depending on the order of action of these reductases, distinct intermediates can be identified. Within the pathway, the cytochrome P450 monooxygenase cheE catalyzes a stereospecific epoxidation on prochaetoglobosin I, cytoglobosin D, and chaetoglobosin J intermediates. The FAD-linked oxidoreductase cheF performs dehydrogenation of the C-20 hydroxyl groups in the 20-dihyrochaetoglobosin A and cytoglobosin D intermediates. Finally, the cytochrome P450 monooxygenase cheG can catalyze the stereospecific dihydroxylation of prochaetoglobosin I and prochaetoglobosin IV at C-19 and C-20, respectively. The Diels-Alderase cheD may play a role in the post-PKS-NRPS biosynthetic steps catalyzing Diels-Alder cyclization. In Chaetomium globosum (strain ATCC 6205 / CBS 148.51 / DSM 1962 / NBRC 6347 / NRRL 1970) (Soil fungus), this protein is Cytochrome P450 monooxygenase cheE.